The sequence spans 1015 residues: Probable beta-galactosidase B (1015 aa).

Positions 1–20 (MAHIYRLLLLLLSNLWFSTA) are cleaved as a signal peptide. Residue Asn-23 is glycosylated (N-linked (GlcNAc...) asparagine). Tyr-90 is a substrate binding site. Asn-99 and Asn-100 each carry an N-linked (GlcNAc...) asparagine glycan. Substrate-binding residues include Asn-135, Ala-136, and Glu-137. Asn-172 is a glycosylation site (N-linked (GlcNAc...) asparagine). Substrate is bound at residue Asn-195. Catalysis depends on Glu-196, which acts as the Proton donor. Asn-211 carries an N-linked (GlcNAc...) asparagine glycan. Residue Tyr-265 coordinates substrate. An intrachain disulfide couples Cys-271 to Cys-324. The active-site Nucleophile is the Glu-308. Tyr-373 is a binding site for substrate. Asn-411, Asn-456, Asn-554, Asn-679, Asn-735, Asn-775, and Asn-821 each carry an N-linked (GlcNAc...) asparagine glycan.

This sequence belongs to the glycosyl hydrolase 35 family.

The protein resides in the secreted. It catalyses the reaction Hydrolysis of terminal non-reducing beta-D-galactose residues in beta-D-galactosides.. Functionally, cleaves beta-linked terminal galactosyl residues from gangliosides, glycoproteins, and glycosaminoglycans. The protein is Probable beta-galactosidase B (lacB) of Aspergillus fumigatus (strain CBS 144.89 / FGSC A1163 / CEA10) (Neosartorya fumigata).